Reading from the N-terminus, the 645-residue chain is MESPAFSKPLKDKINPWGPLIIMGILVRAGASVQRDSPHQVFNVTWKITNLMTGQTANATSLLGTMTDTFPKLYFDLCDLVGDNWDDPEPDIGDGCRSPGGRKRTRLYDFYVCPGHTVLTGCGGPREGYCGKWGCETTGQAYWKPSSSWDLISLKRGNTPKGQGPCFDSSVGSGSIQGATPGGRCNPLVLEFTDAGKRASWDAPKTWGLRLYRSTGADPVTLFSLTRQVLNVGPRVPIGPNPVITEQLPPSQPVQIMLPRPPRPPPSGAASMVPGAPPPSQQPGTGDRLLNLVEGAYQALNLTSPDKTQECWLCLVSGPPYYEGVAVLGTYSNHTSAPANCSVTSQHKLTLSEVTGQGLCIGAVPKTHQALCNTTQKTSDGSYYLASPAGTIWACSTGLTPCLSTTVLNLTTDYCVLVELWPKVTYHSPNYVYGQFEKKTKYKREPVSLTLALLLGGLTMGGIAAGVGTGTTALVATKQFEQLQAAIHTDLGALEKSVSALEKSLTSLSEVVLQNRRGLDLLFLKEGGLCAALKEECCFYADHTGVVRDSMAKLRERLNQRQKLFESGQGWFEGLFNRSPWFTTLISTIMGPLIVLLLILLFGPCILNRLVQFVKDRISVVQALVLTQQYHQLKSIDPEEVESRE.

A signal peptide spans M1–V33. The tract at residues S32–P237 is receptor-binding domain (RBD). Topologically, residues Q34 to L585 are extracellular. 2 N-linked (GlcNAc...) asparagine; by host glycosylation sites follow: N43 and N58. Intrachain disulfides connect C113-C130 and C122-C135. The tract at residues P259–G286 is disordered. N301 is a glycosylation site (N-linked (GlcNAc...) asparagine; by host). Cystine bridges form between C311-C314, C311-C538, C341-C395, C360-C372, C402-C415, and C530-C537. Residues C311–C314 carry the CXXC motif. N-linked (GlcNAc...) asparagine; by host glycosylation is found at N333 and N340. N-linked (GlcNAc...) asparagine; by host glycosylation is found at N373 and N409. The fusion peptide stretch occupies residues V447 to V467. A coiled-coil region spans residues D490 to E510. The immunosuppression stretch occupies residues L513–L529. Positions C530–C538 match the CX6CC motif. The chain crosses the membrane as a helical span at residues I586–I606. A lipid anchor (S-palmitoyl cysteine; by host) is attached at C605. At L607–E640 the chain is on the cytoplasmic side. A YXXL motif; contains endocytosis signal motif is present at residues Y630–L633.

The mature envelope protein (Env) consists of a trimer of SU-TM heterodimers attached by a labile interchain disulfide bond. The activated Env consists of SU monomers and TM trimers. Post-translationally, specific enzymatic cleavages in vivo yield mature proteins. Envelope glycoproteins are synthesized as an inactive precursor that is N-glycosylated and processed likely by host cell furin or by a furin-like protease in the Golgi to yield the mature SU and TM proteins. The cleavage site between SU and TM requires the minimal sequence [KR]-X-[KR]-R. The R-peptide is released from the C-terminus of the cytoplasmic tail of the TM protein upon particle formation as a result of proteolytic cleavage by the viral protease. Cleavage of this peptide is required for TM to become fusogenic. In terms of processing, the CXXC motif is highly conserved across a broad range of retroviral envelope proteins. It is thought to participate in the formation of a labile disulfide bond possibly with the CX6CC motif present in the transmembrane protein. Isomerization of the intersubunit disulfide bond to an SU intrachain disulfide bond is thought to occur upon receptor recognition in order to allow membrane fusion. The transmembrane protein is palmitoylated. Post-translationally, the R-peptide is palmitoylated.

The protein localises to the virion membrane. Its subcellular location is the host cell membrane. Functionally, the surface protein (SU) attaches the virus to the host cell by binding to its receptor. This interaction activates a thiol in a CXXC motif of the C-terminal domain, where the other Cys residue participates in the formation of the intersubunit disulfide. The activated thiol will attack the disulfide and cause its isomerization into a disulfide isomer within the motif. This leads to SU displacement and TM refolding, and is thought to activate its fusogenic potential by unmasking its fusion peptide. Fusion occurs at the host cell plasma membrane. The transmembrane protein (TM) acts as a class I viral fusion protein. Under the current model, the protein has at least 3 conformational states: pre-fusion native state, pre-hairpin intermediate state, and post-fusion hairpin state. During viral and target cell membrane fusion, the coiled coil regions (heptad repeats) assume a trimer-of-hairpins structure, positioning the fusion peptide in close proximity to the C-terminal region of the ectodomain. The formation of this structure appears to drive apposition and subsequent fusion of viral and target cell membranes. Membranes fusion leads to delivery of the nucleocapsid into the cytoplasm. The chain is Envelope glycoprotein (env) from Xenotropic MuLV-related virus (isolate VP42) (XMRV).